A 305-amino-acid polypeptide reads, in one-letter code: NADH-cytochrome b5 reductase 1 (305 aa).

Residues 8-28 form a helical membrane-spanning segment; sequence VLLASLGVGLVTLLGLAVGSY. The 113-residue stretch at 44–156 folds into the FAD-binding FR-type domain; sequence NEKYLLRLLD…RGPSGLLTYT (113 aa). FAD contacts are provided by residues 136–166 and 175–210; these read DSLK…IQPN and VAKK…QCFL.

The protein belongs to the flavoprotein pyridine nucleotide cytochrome reductase family. Requires FAD as cofactor. As to expression, widely expressed.

The protein resides in the membrane. The catalysed reaction is 2 Fe(III)-[cytochrome b5] + NADH = 2 Fe(II)-[cytochrome b5] + NAD(+) + H(+). Functionally, NADH-cytochrome b5 reductases are involved in desaturation and elongation of fatty acids, cholesterol biosynthesis, drug metabolism, and, in erythrocyte, methemoglobin reduction. The sequence is that of NADH-cytochrome b5 reductase 1 (CYB5R1) from Homo sapiens (Human).